Consider the following 565-residue polypeptide: Periplasmic trehalase (565 aa).

The first 30 residues, 1 to 30, serve as a signal peptide directing secretion; sequence MKSPAPSRPQKMALIPACIFLCFAALSVQA. Residues arginine 152, 159–160, asparagine 196, 205–207, 277–279, and glycine 310 each bind substrate; these read WD, RSQ, and RPE. Residues aspartate 312 and glutamate 496 each act as proton donor/acceptor in the active site. Position 511 (glutamate 511) interacts with substrate. The disordered stretch occupies residues 538–565; that stretch reads PCDNVPATRPTVKSATTQPSTKEAQPTP. Residues 548 to 565 are compositionally biased toward polar residues; that stretch reads TVKSATTQPSTKEAQPTP.

The protein belongs to the glycosyl hydrolase 37 family. Monomer.

The protein resides in the periplasm. The enzyme catalyses alpha,alpha-trehalose + H2O = alpha-D-glucose + beta-D-glucose. Provides the cells with the ability to utilize trehalose at high osmolarity by splitting it into glucose molecules that can subsequently be taken up by the phosphotransferase-mediated uptake system. This Escherichia coli O139:H28 (strain E24377A / ETEC) protein is Periplasmic trehalase.